The sequence spans 153 residues: Arginine repressor (153 aa).

Belongs to the ArgR family.

It is found in the cytoplasm. The protein operates within amino-acid biosynthesis; L-arginine biosynthesis [regulation]. Its function is as follows. Regulates arginine biosynthesis genes. The chain is Arginine repressor from Actinobacillus pleuropneumoniae serotype 7 (strain AP76).